The primary structure comprises 231 residues: 7-cyano-7-deazaguanine synthase (231 aa).

8-18 provides a ligand contact to ATP; that stretch reads FSGGQDSTTCL. 4 residues coordinate Zn(2+): Cys-188, Cys-197, Cys-200, and Cys-203.

This sequence belongs to the QueC family. It depends on Zn(2+) as a cofactor.

The catalysed reaction is 7-carboxy-7-deazaguanine + NH4(+) + ATP = 7-cyano-7-deazaguanine + ADP + phosphate + H2O + H(+). Its pathway is purine metabolism; 7-cyano-7-deazaguanine biosynthesis. Functionally, catalyzes the ATP-dependent conversion of 7-carboxy-7-deazaguanine (CDG) to 7-cyano-7-deazaguanine (preQ(0)). The sequence is that of 7-cyano-7-deazaguanine synthase from Salmonella choleraesuis (strain SC-B67).